The following is a 357-amino-acid chain: DNA replication and repair protein RecF (357 aa).

30-37 (GANGSGKT) is an ATP binding site.

It belongs to the RecF family.

Its subcellular location is the cytoplasm. Its function is as follows. The RecF protein is involved in DNA metabolism; it is required for DNA replication and normal SOS inducibility. RecF binds preferentially to single-stranded, linear DNA. It also seems to bind ATP. The chain is DNA replication and repair protein RecF from Escherichia coli O7:K1 (strain IAI39 / ExPEC).